A 485-amino-acid polypeptide reads, in one-letter code: Aspartyl/glutamyl-tRNA(Asn/Gln) amidotransferase subunit B (485 aa).

It belongs to the GatB/GatE family. GatB subfamily. In terms of assembly, heterotrimer of A, B and C subunits.

The enzyme catalyses L-glutamyl-tRNA(Gln) + L-glutamine + ATP + H2O = L-glutaminyl-tRNA(Gln) + L-glutamate + ADP + phosphate + H(+). It catalyses the reaction L-aspartyl-tRNA(Asn) + L-glutamine + ATP + H2O = L-asparaginyl-tRNA(Asn) + L-glutamate + ADP + phosphate + 2 H(+). Allows the formation of correctly charged Asn-tRNA(Asn) or Gln-tRNA(Gln) through the transamidation of misacylated Asp-tRNA(Asn) or Glu-tRNA(Gln) in organisms which lack either or both of asparaginyl-tRNA or glutaminyl-tRNA synthetases. The reaction takes place in the presence of glutamine and ATP through an activated phospho-Asp-tRNA(Asn) or phospho-Glu-tRNA(Gln). This Bordetella petrii (strain ATCC BAA-461 / DSM 12804 / CCUG 43448) protein is Aspartyl/glutamyl-tRNA(Asn/Gln) amidotransferase subunit B.